The sequence spans 386 residues: D(1)-like dopamine receptor (386 aa).

The span at 1–10 (MEIFTTTRGT) shows a compositional bias: polar residues. The disordered stretch occupies residues 1 to 28 (MEIFTTTRGTSAGPEPAPGGHGGTDSPR). Topologically, residues 1 to 35 (MEIFTTTRGTSAGPEPAPGGHGGTDSPRTSDLSLR) are extracellular. A helical membrane pass occupies residues 36 to 56 (ALTGCVLCILIVSTLLGNALV). The Cytoplasmic portion of the chain corresponds to 57–72 (CAAVIKFRHLRSKVTN). The chain crosses the membrane as a helical span at residues 73 to 92 (AFVISLAVSDLFVAVLVMPW). Residues 93 to 109 (RAVSEVAGVWLFGAFCD) are Extracellular-facing. The cysteines at positions 108 and 188 are disulfide-linked. Residues 110–131 (TWVAFDIMCSTASILHLCIISM) traverse the membrane as a helical segment. The Cytoplasmic portion of the chain corresponds to 132–150 (DRYWAISSPFRYERRMTPR). A helical membrane pass occupies residues 151 to 175 (FGCVMIGVAWTLSVLISFIPVQLNW). At 176-195 (HARGRERTDPGDCNASLNRT) the chain is on the extracellular side. Asparagine 189 and asparagine 193 each carry an N-linked (GlcNAc...) asparagine glycan. Residues 196-220 (YAISSSLISFYIPVLIMVGTYTRIF) traverse the membrane as a helical segment. At 221–266 (RIGRTQIRRISSLERAAPRATRGPALCDEESSLKTSFRRETKVLKT) the chain is on the cytoplasmic side. The chain crosses the membrane as a helical span at residues 267–292 (LSVIMGVFVFCWLPFFVLNCMVPFCR). Over 293 to 305 (LEPAAAPCVSDTT) the chain is Extracellular. A helical membrane pass occupies residues 306 to 325 (FSVFVWFGWANSSLNPVIYA). Residues 326–386 (FNADFRKAFS…SRGGPYQFAL (61 aa)) are Cytoplasmic-facing.

This sequence belongs to the G-protein coupled receptor 1 family.

Its subcellular location is the cell membrane. It localises to the cell projection. The protein resides in the cilium membrane. Functionally, this is one of the five types (D1 to D5) of receptors for dopamine. The activity of this receptor is mediated by G proteins which activate adenylyl cyclase. This chain is D(1)-like dopamine receptor, found in Oreochromis mossambicus (Mozambique tilapia).